Consider the following 323-residue polypeptide: Sporulation-delaying protein SdpB (323 aa).

The next 6 membrane-spanning stretches (helical) occupy residues 27 to 49 (LLGF…SYSA), 70 to 92 (SINF…IGWR), 112 to 134 (LTID…VTLL), 155 to 177 (TVLF…NAAL), 219 to 241 (IVVI…ISNI), and 248 to 270 (LVLG…FGLI).

Its subcellular location is the cell membrane. In terms of biological role, required for the maturation of SdpC to SDP. Not required for SdpC signal peptide cleavage, secretion from the cell or disulfide bond formation. The polypeptide is Sporulation-delaying protein SdpB (Bacillus subtilis (strain 168)).